Reading from the N-terminus, the 28-residue chain is Caerulein precursor fragment B1 (28 aa).

The protein belongs to the gastrin/cholecystokinin family. As to expression, expressed by the skin glands.

The protein resides in the secreted. Peptide CPF-B1: Has antimicrobial activity against Gram-negative bacteria E.coli ATCC 25922 (MIC=5 uM) and multidrug-resistant A.baumannii (MIC=4-8 uM), against Gram-positive bacteria S.aureus ATCC 25923 (MIC=5 uM) and methicillin-resistant S.aureus and against fungus C.albicans ATCC 90028 (MIC=25 uM). Has some hemolytic activity against human erythrocytes at high concentrations. The chain is Caerulein precursor fragment B1 from Xenopus borealis (Kenyan clawed frog).